Here is a 342-residue protein sequence, read N- to C-terminus: Holliday junction branch migration complex subunit RuvB (342 aa).

The segment at 1 to 181 is large ATPase domain (RuvB-L); the sequence is MENRMVTPFD…FGMLCAMEFY (181 aa). ATP contacts are provided by residues leucine 20, arginine 21, glycine 62, lysine 65, threonine 66, threonine 67, 128 to 130, arginine 171, tyrosine 181, and arginine 218; that span reads EDY. Residue threonine 66 participates in Mg(2+) binding. Residues 182 to 252 are small ATPAse domain (RuvB-S); the sequence is TDEELMEIVV…GAKAALDLLE (71 aa). Positions 255 to 342 are head domain (RuvB-H); that stretch reads KEGLDKIDNK…KDNQVSIFNK (88 aa). DNA contacts are provided by arginine 310 and arginine 315.

This sequence belongs to the RuvB family. Homohexamer. Forms an RuvA(8)-RuvB(12)-Holliday junction (HJ) complex. HJ DNA is sandwiched between 2 RuvA tetramers; dsDNA enters through RuvA and exits via RuvB. An RuvB hexamer assembles on each DNA strand where it exits the tetramer. Each RuvB hexamer is contacted by two RuvA subunits (via domain III) on 2 adjacent RuvB subunits; this complex drives branch migration. In the full resolvosome a probable DNA-RuvA(4)-RuvB(12)-RuvC(2) complex forms which resolves the HJ.

The protein resides in the cytoplasm. The catalysed reaction is ATP + H2O = ADP + phosphate + H(+). Its function is as follows. The RuvA-RuvB-RuvC complex processes Holliday junction (HJ) DNA during genetic recombination and DNA repair, while the RuvA-RuvB complex plays an important role in the rescue of blocked DNA replication forks via replication fork reversal (RFR). RuvA specifically binds to HJ cruciform DNA, conferring on it an open structure. The RuvB hexamer acts as an ATP-dependent pump, pulling dsDNA into and through the RuvAB complex. RuvB forms 2 homohexamers on either side of HJ DNA bound by 1 or 2 RuvA tetramers; 4 subunits per hexamer contact DNA at a time. Coordinated motions by a converter formed by DNA-disengaged RuvB subunits stimulates ATP hydrolysis and nucleotide exchange. Immobilization of the converter enables RuvB to convert the ATP-contained energy into a lever motion, pulling 2 nucleotides of DNA out of the RuvA tetramer per ATP hydrolyzed, thus driving DNA branch migration. The RuvB motors rotate together with the DNA substrate, which together with the progressing nucleotide cycle form the mechanistic basis for DNA recombination by continuous HJ branch migration. Branch migration allows RuvC to scan DNA until it finds its consensus sequence, where it cleaves and resolves cruciform DNA. In Clostridium botulinum (strain Loch Maree / Type A3), this protein is Holliday junction branch migration complex subunit RuvB.